Here is a 71-residue protein sequence, read N- to C-terminus: ATP synthase F(0) complex subunit e, mitochondrial (71 aa).

Position 34 is an N6-acetyllysine (lysine 34). Serine 68 carries the phosphoserine modification.

Belongs to the ATPase e subunit family. Component of the ATP synthase complex composed at least of ATP5F1A/subunit alpha, ATP5F1B/subunit beta, ATP5MC1/subunit c (homooctomer), MT-ATP6/subunit a, MT-ATP8/subunit 8, ATP5ME/subunit e, ATP5MF/subunit f, ATP5MG/subunit g, ATP5MK/subunit k, ATP5MJ/subunit j, ATP5F1C/subunit gamma, ATP5F1D/subunit delta, ATP5F1E/subunit epsilon, ATP5PF/subunit F6, ATP5PB/subunit b, ATP5PD/subunit d, ATP5PO/subunit OSCP. ATP synthase complex consists of a soluble F(1) head domain (subunits alpha(3) and beta(3)) - the catalytic core - and a membrane F(0) domain - the membrane proton channel (subunits c, a, 8, e, f, g, k and j). These two domains are linked by a central stalk (subunits gamma, delta, and epsilon) rotating inside the F1 region and a stationary peripheral stalk (subunits F6, b, d, and OSCP).

It localises to the mitochondrion. The protein localises to the mitochondrion inner membrane. Its function is as follows. Subunit e, of the mitochondrial membrane ATP synthase complex (F(1)F(0) ATP synthase or Complex V) that produces ATP from ADP in the presence of a proton gradient across the membrane which is generated by electron transport complexes of the respiratory chain. ATP synthase complex consist of a soluble F(1) head domain - the catalytic core - and a membrane F(1) domain - the membrane proton channel. These two domains are linked by a central stalk rotating inside the F(1) region and a stationary peripheral stalk. During catalysis, ATP synthesis in the catalytic domain of F(1) is coupled via a rotary mechanism of the central stalk subunits to proton translocation. In vivo, can only synthesize ATP although its ATP hydrolase activity can be activated artificially in vitro. Part of the complex F(0) domain. The protein is ATP synthase F(0) complex subunit e, mitochondrial of Pongo abelii (Sumatran orangutan).